The following is a 321-amino-acid chain: Triplex capsid protein 2 (321 aa).

This sequence belongs to the herpesviridae TRX2 protein family. As to quaternary structure, interacts with TRX1 and major capisd protein/MCP.

It is found in the virion. The protein resides in the host nucleus. Functionally, structural component of the T=16 icosahedral capsid. The capsid is composed of pentamers and hexamers of major capsid protein/MCP, which are linked together by heterotrimers called triplexes. These triplexes are formed by a single molecule of triplex protein 1/TRX1 and two copies of triplex protein 2/TRX2. Additionally, TRX1 is required for efficient transport of TRX2 to the nucleus, which is the site of capsid assembly. The sequence is that of Triplex capsid protein 2 from Amazona oratrix (yellow-headed parrot).